The primary structure comprises 517 residues: T-box transcription factor TBX5 (517 aa).

Residues methionine 1–phenylalanine 46 are disordered. The segment covering leucine 15–proline 28 has biased composition (basic and acidic residues). Over residues alanine 34 to alanine 45 the composition is skewed to low complexity. The segment at residues leucine 58 to glycine 238 is a DNA-binding region (T-box). 2 disordered regions span residues histidine 270–alanine 313 and serine 331–threonine 369. A compositionally biased stretch (polar residues) spans serine 271 to serine 300. Lysine 338 is modified (N6-acetyllysine). Over residues tyrosine 357–threonine 369 the composition is skewed to polar residues.

Monomer. Homodimer (via the T-box); binds DNA as homodimer. Interacts (via the T-box) with NKX2-5 (via the homeobox); this complex binds DNA. Interacts with GATA4. Interacts with KAT2A and KAT2B. Acetylation at Lys-338 by KAT2A and KAT2B promotes nuclear retention.

Its subcellular location is the nucleus. The protein localises to the cytoplasm. Functionally, DNA-binding protein that regulates the transcription of several genes and is involved in heart development and limb pattern formation. Binds to the core DNA motif of NPPA promoter. The sequence is that of T-box transcription factor TBX5 (Tbx5) from Rattus norvegicus (Rat).